The following is a 1117-amino-acid chain: Cytospin-A (1117 aa).

Disordered stretches follow at residues 1 to 176 (MKKA…NQIS), 293 to 323 (SLSPEITPGNQSDGGGTLTSSVEGSAPGSVE), and 358 to 390 (SSDDALDAPSSSESEGIPSIERSRKGSSGNASE). Composition is skewed to low complexity over residues 45–72 (TTASLSKTKSSDDLLAGMAGGVTVTNGV) and 99–119 (KISTGTSSSTKRSTSIGNKES). Basic and acidic residues-rich tracts occupy residues 120–131 (SSTRERLRERTR) and 158–171 (TTTECDVRMSKSKS). Positions 168–280 (KSKSDNQISD…LNALGFSLEQ (113 aa)) form a coiled coil. Positions 293-303 (SLSPEITPGNQ) are enriched in polar residues. Over residues 358 to 377 (SSDDALDAPSSSESEGIPSI) the composition is skewed to low complexity. Phosphoserine is present on residues Ser384, Ser385, and Ser389. 2 coiled-coil regions span residues 394-449 (ACLT…MESL) and 487-807 (RYME…RGRV). The tract at residues 852 to 878 (SQVPNPTAAAIPRTPLSPSPMKTPPAA) is disordered. Phosphoserine occurs at positions 868, 881, and 887. The interval 920 to 997 (TSSTSRPASL…PTTRSRIREE (78 aa)) is disordered. Residues 946-956 (RSSEEMKRDIS) show a composition bias toward basic and acidic residues. A compositionally biased stretch (low complexity) spans 971 to 990 (TTSPQLSLSSSPTASVTPTT). The region spanning 1011-1116 (GSKRNALLKW…YVTAIYKYFE (106 aa)) is the Calponin-homology (CH) domain.

The protein belongs to the cytospin-A family. In terms of assembly, may interact with both microtubules and actin cytoskeleton.

Its subcellular location is the cytoplasm. The protein localises to the cytoskeleton. It is found in the spindle. The protein resides in the cell junction. It localises to the gap junction. In terms of biological role, involved in cytokinesis and spindle organization. May play a role in actin cytoskeleton organization and microtubule stabilization and hence required for proper cell adhesion and migration. The sequence is that of Cytospin-A (SPECC1L) from Canis lupus familiaris (Dog).